The primary structure comprises 369 residues: Immunoglobulin superfamily member 5 (369 aa).

A signal peptide spans 1–24 (MEGSWRDVLAVLVILAQLTVSGSS). Ig-like V-type domains lie at 25–125 (YQII…LSVQ) and 128–217 (GTLN…LTVN). At 25 to 239 (YQIIEGPRNV…GEGQALPTWA (215 aa)) the chain is on the extracellular side. N-linked (GlcNAc...) asparagine glycans are attached at residues Asn-33 and Asn-45. A disulfide bond links Cys-46 and Cys-109. 3 N-linked (GlcNAc...) asparagine glycosylation sites follow: Asn-146, Asn-196, and Asn-217. The cysteines at positions 149 and 201 are disulfide-linked. A helical transmembrane segment spans residues 240-260 (IILLAVAFSLLLILIIALIII). The Cytoplasmic portion of the chain corresponds to 261–369 (FCCCCVSRRE…PQKIRNVTIV (109 aa)). The interval 321-354 (PKSGEVSLPEQRSSLPQQELDKHRPSPVTHPRVS) is disordered.

This sequence belongs to the immunoglobulin superfamily. Interacts with MAGI1 at tight junctions, forms a tripartite complex with NPHS1. Interacts with LNX1 isoform 2 via its PDZ 2 domain, it may also interact with other isoforms containing this domain. In terms of tissue distribution, in kidney, it is found in glomeruli and in the proximal tubules (at protein level).

It is found in the apical cell membrane. The protein localises to the cell junction. The protein resides in the tight junction. Its function is as follows. Provides, together with MAGI1, an adhesion machinery at tight junctions, which may regulate the permeability of kidney glomerulus and small intestinal epithelial cells. Mediates calcium-independent homophilic cell adhesion. In testis, it may function as a cell adhesion molecule rather than a tight-junction protein. It may participate in the adhesion between spermatogonia-spermatogonia, spermatogonia-Sertoli cells, and Sertoli cells-Sertoli cells. This is Immunoglobulin superfamily member 5 (Igsf5) from Rattus norvegicus (Rat).